The primary structure comprises 301 residues: Probable actin-related protein 2/3 complex subunit 2 (301 aa).

It belongs to the ARPC2 family. In terms of assembly, component of the Arp2/3 complex, at least composed of arx-1, arx-2, arx-4 and arx-6.

The protein resides in the cytoplasm. It is found in the cytoskeleton. In terms of biological role, functions as actin-binding component of the Arp2/3 complex which is involved in regulation of actin polymerization and together with an activating nucleation-promoting factor (NPF) mediates the formation of branched actin networks. Seems to contact the mother actin filament. Plays a role in time-dependent memory loss and the retention of conditioned behavior over time. This is Probable actin-related protein 2/3 complex subunit 2 from Caenorhabditis elegans.